The sequence spans 143 residues: Ayaconin (143 aa).

The signal sequence occupies residues methionine 1–alanine 22.

As to quaternary structure, interacts with human F12 (inactive). As to expression, salivary gland.

The protein localises to the secreted. Its function is as follows. Inhibits the intrinsic blood coagulation pathway in the host by blocking activation of host coagulation factor XII (F12). The protein is Ayaconin of Lutzomyia ayacuchensis (Sand fly).